Reading from the N-terminus, the 462-residue chain is tRNA-2-methylthio-N(6)-dimethylallyladenosine synthase (462 aa).

An MTTase N-terminal domain is found at 2–117 (KRYFIHTFGC…LPDIIGRVSA (116 aa)). 6 residues coordinate [4Fe-4S] cluster: Cys-11, Cys-47, Cys-80, Cys-157, Cys-161, and Cys-164. In terms of domain architecture, Radical SAM core spans 143–372 (SRGKVTEFVT…QKLQRRISGE (230 aa)). The TRAM domain occupies 375-437 (AALVGSEVEV…PNQLAGKQVA (63 aa)).

Belongs to the methylthiotransferase family. MiaB subfamily. As to quaternary structure, monomer. [4Fe-4S] cluster serves as cofactor.

It is found in the cytoplasm. It catalyses the reaction N(6)-dimethylallyladenosine(37) in tRNA + (sulfur carrier)-SH + AH2 + 2 S-adenosyl-L-methionine = 2-methylsulfanyl-N(6)-dimethylallyladenosine(37) in tRNA + (sulfur carrier)-H + 5'-deoxyadenosine + L-methionine + A + S-adenosyl-L-homocysteine + 2 H(+). Its function is as follows. Catalyzes the methylthiolation of N6-(dimethylallyl)adenosine (i(6)A), leading to the formation of 2-methylthio-N6-(dimethylallyl)adenosine (ms(2)i(6)A) at position 37 in tRNAs that read codons beginning with uridine. This is tRNA-2-methylthio-N(6)-dimethylallyladenosine synthase from Myxococcus xanthus (strain DK1622).